A 339-amino-acid chain; its full sequence is Ketol-acid reductoisomerase (NADP(+)) (339 aa).

Residues 1–182 (MRVYYDCDVN…GGGRSGIMKT (182 aa)) enclose the KARI N-terminal Rossmann domain. NADP(+) contacts are provided by residues 24–27 (YGAQ), Ser51, Thr53, and 83–86 (DELQ). The active site involves His108. An NADP(+)-binding site is contributed by Gly134. In terms of domain architecture, KARI C-terminal knotted spans 183-328 (TFREECETDL…DKIRSMMALT (146 aa)). Asp191, Glu195, Glu227, and Glu231 together coordinate Mg(2+). Position 252 (Ser252) interacts with substrate.

It belongs to the ketol-acid reductoisomerase family. It depends on Mg(2+) as a cofactor.

It catalyses the reaction (2R)-2,3-dihydroxy-3-methylbutanoate + NADP(+) = (2S)-2-acetolactate + NADPH + H(+). The catalysed reaction is (2R,3R)-2,3-dihydroxy-3-methylpentanoate + NADP(+) = (S)-2-ethyl-2-hydroxy-3-oxobutanoate + NADPH + H(+). It functions in the pathway amino-acid biosynthesis; L-isoleucine biosynthesis; L-isoleucine from 2-oxobutanoate: step 2/4. It participates in amino-acid biosynthesis; L-valine biosynthesis; L-valine from pyruvate: step 2/4. Involved in the biosynthesis of branched-chain amino acids (BCAA). Catalyzes an alkyl-migration followed by a ketol-acid reduction of (S)-2-acetolactate (S2AL) to yield (R)-2,3-dihydroxy-isovalerate. In the isomerase reaction, S2AL is rearranged via a Mg-dependent methyl migration to produce 3-hydroxy-3-methyl-2-ketobutyrate (HMKB). In the reductase reaction, this 2-ketoacid undergoes a metal-dependent reduction by NADPH to yield (R)-2,3-dihydroxy-isovalerate. In Bartonella bacilliformis (strain ATCC 35685 / KC583 / Herrer 020/F12,63), this protein is Ketol-acid reductoisomerase (NADP(+)).